The primary structure comprises 190 residues: C-type lectin domain family 5 member A (190 aa).

The Cytoplasmic segment spans residues 1-4; that stretch reads MNWH. The chain crosses the membrane as a helical; Signal-anchor for type II membrane protein span at residues 5–25; it reads MIISGLIVVVIKVVGMTFFLL. Topologically, residues 26–190 are extracellular; sequence YFPQVFGKSN…YRWICEMNAK (165 aa). Asn-51, Asn-146, and Asn-153 each carry an N-linked (GlcNAc...) asparagine glycan. The 107-residue stretch at 80-186 folds into the C-type lectin domain; that stretch reads HQGKCFFFSF…CEVSYRWICE (107 aa). Intrachain disulfides connect Cys-101–Cys-185 and Cys-163–Cys-177.

As to quaternary structure, monomer. Homodimer. The majority of CLEC5A is expressed as a monomeric form on macrophages. Interacts with TYROBP/DAP12. The interaction with TYROBP is required for CLEC5 cell surface expression. Interacts with HCST/DAP10. Forms a CLEC5A/TYROBP/HCST trimolecular complex depending almost solely on TYROBP. In terms of processing, N-glycosylated. Contains sialic acid residues. In terms of tissue distribution, strong expression in bone marrow cells and thioglycollate-induced neutrophils (at protein level). Expressed on granulocytes and monocytes from bone marrow and peripheral blood. Expressed in macrophage cell line J-774, but not in T-cell lines, B-cell lines, or mast cell lines.

It localises to the cell membrane. Functionally, functions as a positive regulator of osteoclastogenesis. Cell surface receptor that signals via TYROBP. Regulates inflammatory responses. This Mus musculus (Mouse) protein is C-type lectin domain family 5 member A (Clec5a).